Here is a 231-residue protein sequence, read N- to C-terminus: Isoprenyl transferase (231 aa).

The active site involves Asp-14. Position 14 (Asp-14) interacts with Mg(2+). Residues 15–18, Trp-19, Arg-27, His-31, and 59–61 contribute to the substrate site; these read GNGR and STE. Asn-62 functions as the Proton acceptor in the catalytic mechanism. Residues Trp-63, Arg-65, Arg-176, and 182 to 184 contribute to the substrate site; that span reads RIS. Mg(2+) is bound at residue Glu-195.

Belongs to the UPP synthase family. Homodimer. The cofactor is Mg(2+).

Catalyzes the condensation of isopentenyl diphosphate (IPP) with allylic pyrophosphates generating different type of terpenoids. The chain is Isoprenyl transferase from Aquifex aeolicus (strain VF5).